We begin with the raw amino-acid sequence, 379 residues long: Glutamate 5-kinase (379 aa).

K19 lines the ATP pocket. Positions 59, 146, and 158 each coordinate substrate. ATP contacts are provided by residues T178–D179 and T220–K226. Residues S285 to D363 enclose the PUA domain.

Belongs to the glutamate 5-kinase family.

It is found in the cytoplasm. The catalysed reaction is L-glutamate + ATP = L-glutamyl 5-phosphate + ADP. Its pathway is amino-acid biosynthesis; L-proline biosynthesis; L-glutamate 5-semialdehyde from L-glutamate: step 1/2. Its function is as follows. Catalyzes the transfer of a phosphate group to glutamate to form L-glutamate 5-phosphate. The protein is Glutamate 5-kinase of Vibrio parahaemolyticus serotype O3:K6 (strain RIMD 2210633).